The primary structure comprises 104 residues: Large ribosomal subunit protein uL24 (104 aa).

Belongs to the universal ribosomal protein uL24 family. In terms of assembly, part of the 50S ribosomal subunit.

Functionally, one of two assembly initiator proteins, it binds directly to the 5'-end of the 23S rRNA, where it nucleates assembly of the 50S subunit. One of the proteins that surrounds the polypeptide exit tunnel on the outside of the subunit. This Rhodopseudomonas palustris (strain BisA53) protein is Large ribosomal subunit protein uL24.